Reading from the N-terminus, the 120-residue chain is Large ribosomal subunit protein eL18 (120 aa).

Belongs to the eukaryotic ribosomal protein eL18 family.

The chain is Large ribosomal subunit protein eL18 from Pyrococcus abyssi (strain GE5 / Orsay).